A 244-amino-acid chain; its full sequence is Gasdermin-like protein rcd-1-2 (244 aa).

Residues 1 to 22 (MDNEEWFPLKQTHYPPPTIPSM) are disordered.

The protein belongs to the gasdermin family. In terms of assembly, heterooligomer; the heterooligomer with rcd-1-1 forms a ring-shaped pore complex when inserted in the membrane.

It localises to the cytoplasm. Its subcellular location is the cell membrane. In terms of biological role, gasdermin-like protein involved in heterokaryon incompatibility, a process that ensures that during spontaneous vegetative cell fusion, only compatible cells from the same colony survive (non-self-recognition). In N.crassa, the rcd-1 locus exists as 2 incompatible alleles, rcd-1-1 (AC Q7SBA0) and rcd-1-2 (this entry). During the allorecognition process, forms a heterooligomer with rcd-1-1, thereby forming a functional gasdermin-like complex that binds to membranes and forms pores, triggering cell death. Binds negatively charged phospholipids, such as cardiolipin and phosphatidylserine. Also binds to phosphoinositides, preferentially to phosphatidylinositol-3-phosphate (PtdIns-3-P), PtdIns-5-P and PtdIns-3,5-P2. This is Gasdermin-like protein rcd-1-2 from Neurospora crassa.